The chain runs to 332 residues: GTP cyclohydrolase-2 (332 aa).

2 disordered regions span residues 1 to 20 and 25 to 46; these read MASKDIVHPQPERRHGSETH and PLLSPTLTPSHIPSQTPQIPPE. A compositionally biased stretch (polar residues) spans 29–41; it reads PTLTPSHIPSQTP. Position 171 to 175 (171 to 175) interacts with GTP; it reads RIHSE. Residues cysteine 176, cysteine 187, and cysteine 189 each coordinate Zn(2+). Residues glutamine 192, 214 to 216, and threonine 236 contribute to the GTP site; that span reads EGR. The Proton acceptor role is filled by aspartate 248. The active-site Nucleophile is the arginine 250. GTP contacts are provided by threonine 271 and lysine 276.

The protein belongs to the GTP cyclohydrolase II family. It depends on Zn(2+) as a cofactor.

The catalysed reaction is GTP + 4 H2O = 2,5-diamino-6-hydroxy-4-(5-phosphoribosylamino)-pyrimidine + formate + 2 phosphate + 3 H(+). It functions in the pathway cofactor biosynthesis; riboflavin biosynthesis; 5-amino-6-(D-ribitylamino)uracil from GTP: step 1/4. Catalyzes the conversion of GTP to 2,5-diamino-6-ribosylamino-4(3H)-pyrimidinone 5'-phosphate (DARP), formate and pyrophosphate. This Meyerozyma guilliermondii (strain ATCC 6260 / CBS 566 / DSM 6381 / JCM 1539 / NBRC 10279 / NRRL Y-324) (Yeast) protein is GTP cyclohydrolase-2 (RIB1).